The primary structure comprises 252 residues: Triosephosphate isomerase (252 aa).

9-11 (NWK) is a binding site for substrate. Histidine 100 acts as the Electrophile in catalysis. Residue glutamate 171 is the Proton acceptor of the active site. Residues glycine 177, serine 216, and 237 to 238 (GG) each bind substrate.

It belongs to the triosephosphate isomerase family. As to quaternary structure, homodimer.

Its subcellular location is the cytoplasm. It catalyses the reaction D-glyceraldehyde 3-phosphate = dihydroxyacetone phosphate. It functions in the pathway carbohydrate biosynthesis; gluconeogenesis. It participates in carbohydrate degradation; glycolysis; D-glyceraldehyde 3-phosphate from glycerone phosphate: step 1/1. Involved in the gluconeogenesis. Catalyzes stereospecifically the conversion of dihydroxyacetone phosphate (DHAP) to D-glyceraldehyde-3-phosphate (G3P). This Polynucleobacter necessarius subsp. necessarius (strain STIR1) protein is Triosephosphate isomerase.